The chain runs to 329 residues: o-succinylbenzoate synthase (329 aa).

The active-site Proton donor is the Lys-140. Mg(2+) is bound by residues Asp-168, Glu-197, and Asp-220. Lys-242 (proton acceptor) is an active-site residue.

This sequence belongs to the mandelate racemase/muconate lactonizing enzyme family. MenC type 1 subfamily. A divalent metal cation is required as a cofactor.

The enzyme catalyses (1R,6R)-6-hydroxy-2-succinyl-cyclohexa-2,4-diene-1-carboxylate = 2-succinylbenzoate + H2O. The protein operates within quinol/quinone metabolism; 1,4-dihydroxy-2-naphthoate biosynthesis; 1,4-dihydroxy-2-naphthoate from chorismate: step 4/7. It functions in the pathway quinol/quinone metabolism; menaquinone biosynthesis. Converts 2-succinyl-6-hydroxy-2,4-cyclohexadiene-1-carboxylate (SHCHC) to 2-succinylbenzoate (OSB). The chain is o-succinylbenzoate synthase from Haemophilus influenzae (strain ATCC 51907 / DSM 11121 / KW20 / Rd).